We begin with the raw amino-acid sequence, 279 residues long: Dehydrogenase/reductase SDR family member 4 (279 aa).

37 to 61 (LVTASTDGIGLAIARRLAQDGAHVV) contacts NADP(+). Lys93 bears the N6-acetyllysine; alternate mark. The residue at position 93 (Lys93) is an N6-succinyllysine; alternate. Ser170 contacts substrate. Tyr183 acts as the Proton acceptor in catalysis. Lys187 is an NADP(+) binding site. An N6-acetyllysine; alternate modification is found at Lys217. Lys217 carries the N6-succinyllysine; alternate modification. A Phosphoserine modification is found at Ser221. 2 positions are modified to N6-succinyllysine: Lys228 and Lys235. The Peroxisomal targeting signal motif lies at 277–279 (SRL).

This sequence belongs to the short-chain dehydrogenases/reductases (SDR) family. Homotetramer. In terms of tissue distribution, detected in heart, kidney, liver and small intestine. Detected at lower levels in brain, lung, stomach and spleen.

Its subcellular location is the peroxisome. The enzyme catalyses a secondary alcohol + NADP(+) = a ketone + NADPH + H(+). It catalyses the reaction 3alpha-hydroxy-5beta-pregnan-20-one + NADP(+) = 5beta-pregnan-3,20-dione + NADPH + H(+). The catalysed reaction is 5beta-dihydrotestosterone + NADPH + H(+) = 5beta-androstane-3alpha,17beta-diol + NADP(+). It carries out the reaction all-trans-retinol + NADP(+) = all-trans-retinal + NADPH + H(+). The enzyme catalyses isatin + NADPH + H(+) = 3-hydroxyindolin-2-one + NADP(+). With respect to regulation, inhibited by kaempferol, quercetin, genistein and myristic acid. Functionally, NADPH-dependent oxidoreductase which catalyzes the reduction of a variety of compounds bearing carbonyl groups including ketosteroids, alpha-dicarbonyl compounds, aldehydes, aromatic ketones and quinones. Reduces all-trans-retinal and 9-cis retinal. Reduces 3-ketosteroids and benzil into 3alpha-hydroxysteroids and S-benzoin, respectively, in contrast to the stereoselectivity of primates DHRS4s which produce 3beta-hydroxysteroids and R-benzoin. In the reverse reaction, catalyzes the NADP-dependent oxidation of 3alpha-hydroxysteroids and alcohol, but with much lower efficiency. Involved in the metabolism of 3alpha-hydroxysteroids, retinoid, isatin and xenobiotic carbonyl compounds. This chain is Dehydrogenase/reductase SDR family member 4 (DHRS4), found in Sus scrofa (Pig).